The chain runs to 282 residues: ATP synthase gamma chain (282 aa).

Belongs to the ATPase gamma chain family. F-type ATPases have 2 components, CF(1) - the catalytic core - and CF(0) - the membrane proton channel. CF(1) has five subunits: alpha(3), beta(3), gamma(1), delta(1), epsilon(1). CF(0) has three main subunits: a, b and c.

It localises to the cell membrane. Its function is as follows. Produces ATP from ADP in the presence of a proton gradient across the membrane. The gamma chain is believed to be important in regulating ATPase activity and the flow of protons through the CF(0) complex. This Clostridium botulinum (strain ATCC 19397 / Type A) protein is ATP synthase gamma chain.